The following is a 984-amino-acid chain: MALDCLLLFLLASAVAAMEETLMDTRTATAELGWTANPASGWEEVSGYDENLNTIRTYQVCNVFEPNQNNWLLTTFINRRGAHRIYTEMRFTVRDCSSLPNVPGSCKETFNLYYYETDSVIATKKSAFWSEAPYLKVDTIAADESFSQVDFGGRLMKVNTEVRSFGPLTRNGFYLAFQDYGACMSLLSVRVFFKKCPSIVQNFAVFPETMTGAESTSLVIARGTCIPNAEEVDVPIKLYCNGDGEWMVPIGRCTCKPGYEPENSVACKACPAGTFKASQEAEGCSHCPSNSRSPSEASPICTCRTGYYRADFDPPEVACTSVPSGPRNVISIVNETSIILEWHPPRETGGRDDVTYNIICKKCRADRRSCSRCDDNVEFVPRQLGLTECRVSISSLWAHTPYTFDIQAINGVSSKSPFPPQHVSVNITTNQAAPSTVPIMHQVSATMRSITLSWPQPEQPNGIILDYEIRYYEKEHNEFNSSMARSQTNTARIDGLRPGMVYVVQVRARTVAGYGKFSGKMCFQTLTDDDYKSELREQLPLIAGSAAAGVVFVVSLVAISIVCSRKRAYSKEAAYSDKLQHYSTGRGSPGMKIYIDPFTYEDPNEAVREFAKEIDVSFVKIEEVIGAGEFGEVYKGRLKLPGKREIYVAIKTLKAGYSEKQRRDFLSEASIMGQFDHPNIIRLEGVVTKSRPVMIITEFMENGALDSFLRQNDGQFTVIQLVGMLRGIAAGMKYLSEMNYVHRDLAARNILVNSNLVCKVSDFGLSRYLQDDTSDPTYTSSLGGKIPVRWTAPEAIAYRKFTSASDVWSYGIVMWEVMSFGERPYWDMSNQDVINAIEQDYRLPPPMDCPAALHQLMLDCWQKDRNSRPRFAEIVNTLDKMIRNPASLKTVATITAVPSQPLLDRSIPDFTAFTTVDDWLSAIKMVQYRDSFLTAGFTSLQLVTQMTSEDLLRIGVTLAGHQKKILSSIHSMRVQMNQSPSVMA.

Residues 1–17 (MALDCLLLFLLASAVAA) form the signal peptide. The Extracellular portion of the chain corresponds to 18 to 540 (MEETLMDTRT…YKSELREQLP (523 aa)). The 183-residue stretch at 19–201 (EETLMDTRTA…FFKKCPSIVQ (183 aa)) folds into the Eph LBD domain. Fibronectin type-III domains are found at residues 322 to 432 (VPSG…TNQA) and 433 to 528 (APST…TLTD). Residues N334, N426, and N480 are each glycosylated (N-linked (GlcNAc...) asparagine). Residues 541–563 (LIAGSAAAGVVFVVSLVAISIVC) form a helical membrane-spanning segment. Over 564 to 984 (SRKRAYSKEA…QMNQSPSVMA (421 aa)) the chain is Cytoplasmic. Y600 is subject to Phosphotyrosine. Residues 619–882 (VKIEEVIGAG…EIVNTLDKMI (264 aa)) form the Protein kinase domain. Residues 625–633 (IGAGEFGEV) and K651 contribute to the ATP site. D744 functions as the Proton acceptor in the catalytic mechanism. An SAM domain is found at 911–975 (TAFTTVDDWL…LSSIHSMRVQ (65 aa)). Y928 carries the phosphotyrosine; by autocatalysis modification. The PDZ-binding signature appears at 982–984 (VMA).

The protein belongs to the protein kinase superfamily. Tyr protein kinase family. Ephrin receptor subfamily. As to quaternary structure, heterotetramer upon binding of the ligand. The heterotetramer is composed of an ephrin dimer and a receptor dimer. Oligomerization is probably required to induce biological responses. Interacts with EPHB6; transphosphorylates EPHB6 to form an active signaling complex. Interacts with PICK1. Interacts (through Tyr-594) with NCK1 (via SH2 domain); activates the JUN cascade to regulate cell adhesion. The ligand-activated form interacts (through Tyr-928) with GRB7 and GRB10 (via SH2 domains). The ligand-activated form interacts (residues within the catalytic domain) with GRB2 (via SH2 domain). Interacts with GRB2, SHC1 and SRC; activates the MAPK/ERK cascade to regulate cell migration. Interacts with CBL; regulates receptor degradation through ubiquitination. Interacts with ACP1. Phosphorylated. Autophosphorylation is stimulated by the ligand EFNB1. Required for interaction with SH2 domain-containing interactors, for activation of the MAPK/ERK and JUN signaling cascades and for ubiquitination by CBL. In terms of processing, ubiquitinated; (EFNB1)ligand-induced poly- and/or multi-ubiquitination by CBL is regulated by SRC and leads to lysosomal degradation. In terms of tissue distribution, expressed in neural stem and progenitor cells in the dentate gyrus. Expressed in myogenic progenitor cells.

It is found in the cell membrane. The protein localises to the early endosome membrane. The protein resides in the cell projection. Its subcellular location is the dendrite. It carries out the reaction L-tyrosyl-[protein] + ATP = O-phospho-L-tyrosyl-[protein] + ADP + H(+). Functionally, receptor tyrosine kinase which binds promiscuously transmembrane ephrin-B family ligands residing on adjacent cells, leading to contact-dependent bidirectional signaling into neighboring cells. The signaling pathway downstream of the receptor is referred to as forward signaling while the signaling pathway downstream of the ephrin ligand is referred to as reverse signaling. Cognate/functional ephrin ligands for this receptor include EFNB1, EFNB2 and EFNB3. During nervous system development, regulates retinal axon guidance redirecting ipsilaterally ventrotemporal retinal ganglion cells axons at the optic chiasm midline. This probably requires repulsive interaction with EFNB2. In the adult nervous system together with EFNB3, regulates chemotaxis, proliferation and polarity of the hippocampus neural progenitors. In addition to its role in axon guidance also plays an important redundant role with other ephrin-B receptors in development and maturation of dendritic spines and synapse formation. May also regulate angiogenesis. More generally, may play a role in targeted cell migration and adhesion. Upon activation by EFNB1 and probably other ephrin-B ligands activates the MAPK/ERK and the JNK signaling cascades to regulate cell migration and adhesion respectively. Involved in the maintenance of the pool of satellite cells (muscle stem cells) by promoting their self-renewal and reducing their activation and differentiation. The sequence is that of Ephrin type-B receptor 1 (Ephb1) from Mus musculus (Mouse).